A 513-amino-acid chain; its full sequence is ATP synthase subunit alpha (513 aa).

Position 169–176 (169–176) interacts with ATP; that stretch reads GDRQTGKT.

The protein belongs to the ATPase alpha/beta chains family. As to quaternary structure, F-type ATPases have 2 components, CF(1) - the catalytic core - and CF(0) - the membrane proton channel. CF(1) has five subunits: alpha(3), beta(3), gamma(1), delta(1), epsilon(1). CF(0) has three main subunits: a(1), b(2) and c(9-12). The alpha and beta chains form an alternating ring which encloses part of the gamma chain. CF(1) is attached to CF(0) by a central stalk formed by the gamma and epsilon chains, while a peripheral stalk is formed by the delta and b chains.

It localises to the cell inner membrane. The catalysed reaction is ATP + H2O + 4 H(+)(in) = ADP + phosphate + 5 H(+)(out). In terms of biological role, produces ATP from ADP in the presence of a proton gradient across the membrane. The alpha chain is a regulatory subunit. This Ruegeria sp. (strain TM1040) (Silicibacter sp.) protein is ATP synthase subunit alpha.